A 180-amino-acid chain; its full sequence is Shikimate kinase (180 aa).

14 to 19 (GAGKST) contributes to the ATP binding site. A Mg(2+)-binding site is contributed by Ser18. Positions 36, 60, and 82 each coordinate substrate. An ATP-binding site is contributed by Arg120. Substrate is bound at residue Arg139.

The protein belongs to the shikimate kinase family. As to quaternary structure, monomer. The cofactor is Mg(2+).

The protein localises to the cytoplasm. It carries out the reaction shikimate + ATP = 3-phosphoshikimate + ADP + H(+). It participates in metabolic intermediate biosynthesis; chorismate biosynthesis; chorismate from D-erythrose 4-phosphate and phosphoenolpyruvate: step 5/7. Catalyzes the specific phosphorylation of the 3-hydroxyl group of shikimic acid using ATP as a cosubstrate. This chain is Shikimate kinase, found in Chromohalobacter salexigens (strain ATCC BAA-138 / DSM 3043 / CIP 106854 / NCIMB 13768 / 1H11).